The primary structure comprises 157 residues: Small ribosomal subunit protein uS9 (157 aa).

Belongs to the universal ribosomal protein uS9 family.

The sequence is that of Small ribosomal subunit protein uS9 from Caulobacter vibrioides (strain ATCC 19089 / CIP 103742 / CB 15) (Caulobacter crescentus).